Reading from the N-terminus, the 81-residue chain is MSDPFSEAQHQLDALGLRCPEPVMMVRKSVRKMAQGETLLIIADDPATTRDIPSFCEFMDHKLLASQTDSTPYQYLIQKGL.

The active-site Cysteine persulfide intermediate is the Cys19.

This sequence belongs to the sulfur carrier protein TusA family.

It localises to the cytoplasm. Functionally, sulfur carrier protein which probably makes part of a sulfur-relay system. This is Sulfur carrier protein TusA from Shewanella sediminis (strain HAW-EB3).